The following is a 343-amino-acid chain: Uroporphyrinogen decarboxylase (343 aa).

Residues 23–27 (RQAGR), aspartate 73, tyrosine 150, serine 205, and histidine 322 contribute to the substrate site.

The protein belongs to the uroporphyrinogen decarboxylase family. Homodimer.

The protein localises to the cytoplasm. The enzyme catalyses uroporphyrinogen III + 4 H(+) = coproporphyrinogen III + 4 CO2. It participates in porphyrin-containing compound metabolism; protoporphyrin-IX biosynthesis; coproporphyrinogen-III from 5-aminolevulinate: step 4/4. Its function is as follows. Catalyzes the decarboxylation of four acetate groups of uroporphyrinogen-III to yield coproporphyrinogen-III. The polypeptide is Uroporphyrinogen decarboxylase (Cereibacter sphaeroides (strain ATCC 17029 / ATH 2.4.9) (Rhodobacter sphaeroides)).